We begin with the raw amino-acid sequence, 161 residues long: ATP synthase subunit b 1 (161 aa).

The helical transmembrane segment at 1–21 (MFATAEFWILACLVAFFAILG) threads the bilayer.

Belongs to the ATPase B chain family. As to quaternary structure, F-type ATPases have 2 components, F(1) - the catalytic core - and F(0) - the membrane proton channel. F(1) has five subunits: alpha(3), beta(3), gamma(1), delta(1), epsilon(1). F(0) has three main subunits: a(1), b(2) and c(10-14). The alpha and beta chains form an alternating ring which encloses part of the gamma chain. F(1) is attached to F(0) by a central stalk formed by the gamma and epsilon chains, while a peripheral stalk is formed by the delta and b chains.

It is found in the cell inner membrane. F(1)F(0) ATP synthase produces ATP from ADP in the presence of a proton or sodium gradient. F-type ATPases consist of two structural domains, F(1) containing the extramembraneous catalytic core and F(0) containing the membrane proton channel, linked together by a central stalk and a peripheral stalk. During catalysis, ATP synthesis in the catalytic domain of F(1) is coupled via a rotary mechanism of the central stalk subunits to proton translocation. Functionally, component of the F(0) channel, it forms part of the peripheral stalk, linking F(1) to F(0). This is ATP synthase subunit b 1 from Parvibaculum lavamentivorans (strain DS-1 / DSM 13023 / NCIMB 13966).